The chain runs to 360 residues: MNAPLGGIWLWLPLLLTWLTPEVNSSWWYMRATGGSSRVMCDNVPGLVSSQRQLCHRHPDVMRAISQGVAEWTAECQHQFRQHRWNCNTLDRDHSLFGRVLLRSSRESAFVYAISSAGVVFAITRACSQGEVKSCSCDPKKMGSAKDSKGIFDWGGCSDNIDYGIKFARAFVDAKERKGKDARALMNLHNNRAGRKAVKRFLKQECKCHGVSGSCTLRTCWLAMADFRKTGDYLWRKYNGAIQVVMNQDGTGFTVANERFKKPTKNDLVYFENSPDYCIRDREAGSLGTAGRVCNLTSRGMDSCEVMCCGRGYDTSHVTRMTKCGCKFHWCCAVRCQDCLEALDVHTCKAPKNADWTTAT.

The first 25 residues, 1–25 (MNAPLGGIWLWLPLLLTWLTPEVNS), serve as a signal peptide directing secretion. 11 disulfide bridges follow: Cys76/Cys87, Cys127/Cys135, Cys137/Cys157, Cys206/Cys220, Cys208/Cys215, Cys278/Cys309, Cys294/Cys304, Cys308/Cys348, Cys324/Cys339, Cys326/Cys336, and Cys331/Cys332. Ser212 carries the O-palmitoleoyl serine; by PORCN lipid modification. A glycan (N-linked (GlcNAc...) asparagine) is linked at Asn295.

The protein belongs to the Wnt family. Post-translationally, palmitoleoylation is required for efficient binding to frizzled receptors. Depalmitoleoylation leads to Wnt signaling pathway inhibition. Expressed in brain in the thalamus, in fetal and adult lung and in placenta.

It localises to the secreted. The protein resides in the extracellular space. Its subcellular location is the extracellular matrix. Its function is as follows. Ligand for members of the frizzled family of seven transmembrane receptors. Functions in the canonical Wnt signaling pathway that results in activation of transcription factors of the TCF/LEF family. Functions as a upstream regulator of FGF10 expression. Plays an important role in embryonic lung development. May contribute to embryonic brain development by regulating the proliferation of dopaminergic precursors and neurons. The sequence is that of Protein Wnt-2 (WNT2) from Homo sapiens (Human).